Reading from the N-terminus, the 554-residue chain is Glucose-6-phosphate isomerase (554 aa).

The active-site Proton donor is Glu358. Catalysis depends on residues His389 and Lys515. Polar residues predominate over residues 527–540 (ANNSPAPQSDSSTD). Residues 527 to 554 (ANNSPAPQSDSSTDALVRRYRSERGRTS) form a disordered region. Residues 542-554 (LVRRYRSERGRTS) show a composition bias toward basic and acidic residues.

It belongs to the GPI family.

Its subcellular location is the cytoplasm. The enzyme catalyses alpha-D-glucose 6-phosphate = beta-D-fructose 6-phosphate. It functions in the pathway carbohydrate biosynthesis; gluconeogenesis. The protein operates within carbohydrate degradation; glycolysis; D-glyceraldehyde 3-phosphate and glycerone phosphate from D-glucose: step 2/4. Catalyzes the reversible isomerization of glucose-6-phosphate to fructose-6-phosphate. This is Glucose-6-phosphate isomerase from Mycolicibacterium paratuberculosis (strain ATCC BAA-968 / K-10) (Mycobacterium paratuberculosis).